The following is an 84-amino-acid chain: Large ribosomal subunit protein bL31B (84 aa).

It belongs to the bacterial ribosomal protein bL31 family. Type B subfamily. As to quaternary structure, part of the 50S ribosomal subunit.

This Staphylococcus aureus (strain Mu3 / ATCC 700698) protein is Large ribosomal subunit protein bL31B.